The sequence spans 166 residues: Small ribosomal subunit protein uS5 (166 aa).

Positions 12-75 (YIEKLVQVNR…EAARRNMIQV (64 aa)) constitute an S5 DRBM domain.

This sequence belongs to the universal ribosomal protein uS5 family. As to quaternary structure, part of the 30S ribosomal subunit. Contacts proteins S4 and S8.

Its function is as follows. With S4 and S12 plays an important role in translational accuracy. Located at the back of the 30S subunit body where it stabilizes the conformation of the head with respect to the body. This is Small ribosomal subunit protein uS5 from Pseudomonas entomophila (strain L48).